Reading from the N-terminus, the 427-residue chain is Trigger factor (427 aa).

The PPIase FKBP-type domain occupies 163–248 (GDTVVIDFVG…IHEVKAKEVP (86 aa)).

This sequence belongs to the FKBP-type PPIase family. Tig subfamily.

The protein localises to the cytoplasm. It catalyses the reaction [protein]-peptidylproline (omega=180) = [protein]-peptidylproline (omega=0). Functionally, involved in protein export. Acts as a chaperone by maintaining the newly synthesized protein in an open conformation. Functions as a peptidyl-prolyl cis-trans isomerase. This chain is Trigger factor, found in Streptococcus pneumoniae (strain Taiwan19F-14).